The primary structure comprises 264 residues: Glutamate racemase (264 aa).

Substrate is bound by residues 10–11 and 42–43; these read DS and YG. The Proton donor/acceptor role is filled by cysteine 73. Substrate is bound at residue 74–75; sequence NT. Residue cysteine 183 is the Proton donor/acceptor of the active site. 184 to 185 provides a ligand contact to substrate; the sequence is TH.

It belongs to the aspartate/glutamate racemases family.

It catalyses the reaction L-glutamate = D-glutamate. The protein operates within cell wall biogenesis; peptidoglycan biosynthesis. Its function is as follows. Provides the (R)-glutamate required for cell wall biosynthesis. The chain is Glutamate racemase from Streptococcus agalactiae serotype III (strain NEM316).